The primary structure comprises 208 residues: Ion-translocating oxidoreductase complex subunit G (208 aa).

The chain crosses the membrane as a helical span at residues 9-29 (GVTLAVFAALTTGLTAMVNAL). An FMN phosphoryl threonine modification is found at Thr174.

This sequence belongs to the RnfG family. As to quaternary structure, the complex is composed of six subunits: RnfA, RnfB, RnfC, RnfD, RnfE and RnfG. FMN serves as cofactor.

The protein resides in the cell inner membrane. Its function is as follows. Part of a membrane-bound complex that couples electron transfer with translocation of ions across the membrane. The protein is Ion-translocating oxidoreductase complex subunit G of Cronobacter sakazakii (strain ATCC BAA-894) (Enterobacter sakazakii).